Consider the following 446-residue polypeptide: tRNA-2-methylthio-N(6)-dimethylallyladenosine synthase (446 aa).

An MTTase N-terminal domain is found at 3 to 124 (KKLYIKTYGC…LPELISKVVR (122 aa)). The [4Fe-4S] cluster site is built by Cys-12, Cys-48, Cys-87, Cys-162, Cys-166, and Cys-169. One can recognise a Radical SAM core domain in the interval 148 to 380 (YPQGASAFIS…QKELSSQQLA (233 aa)). The TRAM domain occupies 383–446 (ESCVGSTMKV…SNSLTGEIYT (64 aa)).

The protein belongs to the methylthiotransferase family. MiaB subfamily. Monomer. Requires [4Fe-4S] cluster as cofactor.

The protein localises to the cytoplasm. It carries out the reaction N(6)-dimethylallyladenosine(37) in tRNA + (sulfur carrier)-SH + AH2 + 2 S-adenosyl-L-methionine = 2-methylsulfanyl-N(6)-dimethylallyladenosine(37) in tRNA + (sulfur carrier)-H + 5'-deoxyadenosine + L-methionine + A + S-adenosyl-L-homocysteine + 2 H(+). Catalyzes the methylthiolation of N6-(dimethylallyl)adenosine (i(6)A), leading to the formation of 2-methylthio-N6-(dimethylallyl)adenosine (ms(2)i(6)A) at position 37 in tRNAs that read codons beginning with uridine. This Rickettsia canadensis (strain McKiel) protein is tRNA-2-methylthio-N(6)-dimethylallyladenosine synthase.